Here is a 519-residue protein sequence, read N- to C-terminus: UPF0053 protein bbp_300 (519 aa).

A run of 7 helical transmembrane segments spans residues 13 to 35 (LLTL…AILS), 48 to 70 (LIGL…WMVT), 80 to 102 (YFSF…FKAT), 123 to 145 (AGFW…DAII), 150 to 172 (TINN…LIAS), 185 to 207 (VVVL…ALGF), and 212 to 231 (GYLY…NQIA). 2 consecutive CBS domains span residues 311-373 (MTPR…IIDF) and 374-434 (SSTT…DADE).

It belongs to the UPF0053 family.

The protein localises to the cell membrane. The sequence is that of UPF0053 protein bbp_300 from Buchnera aphidicola subsp. Baizongia pistaciae (strain Bp).